Here is a 313-residue protein sequence, read N- to C-terminus: uncharacterized protein (313 aa).

It to B.subtilis YqxC and T.hyodysenteriae hemolysin TlyA.

This is an uncharacterized protein from Bacillus subtilis (strain 168).